The following is a 323-amino-acid chain: tRNA U34 carboxymethyltransferase (323 aa).

Residues Lys-91, Trp-105, Lys-110, Gly-130, 152 to 154 (DPT), 181 to 182 (IE), Met-196, Tyr-200, and Arg-315 each bind carboxy-S-adenosyl-L-methionine.

The protein belongs to the class I-like SAM-binding methyltransferase superfamily. CmoB family. As to quaternary structure, homotetramer.

It carries out the reaction carboxy-S-adenosyl-L-methionine + 5-hydroxyuridine(34) in tRNA = 5-carboxymethoxyuridine(34) in tRNA + S-adenosyl-L-homocysteine + H(+). Catalyzes carboxymethyl transfer from carboxy-S-adenosyl-L-methionine (Cx-SAM) to 5-hydroxyuridine (ho5U) to form 5-carboxymethoxyuridine (cmo5U) at position 34 in tRNAs. The sequence is that of tRNA U34 carboxymethyltransferase from Shigella dysenteriae serotype 1 (strain Sd197).